The chain runs to 165 residues: UI (165 aa).

An N-terminal signal peptide occupies residues 1 to 18; that stretch reads MKPVPLILLLATVLLSSH. V163 carries the valine amide modification.

Belongs to the sauvagine/corticotropin-releasing factor/urotensin I family.

Its subcellular location is the secreted. Urotensin is found in the teleost caudal neurosecretory system. It has a suggested role in osmoregulation and as a corticotropin-releasing factor. The non-hormonal portion of this precursor may be a urotensin binding protein, urophysin. The polypeptide is UI (Oncorhynchus mykiss (Rainbow trout)).